The following is a 421-amino-acid chain: uncharacterized protein (421 aa).

This is an uncharacterized protein from Acanthamoeba polyphaga (Amoeba).